The chain runs to 142 residues: Large ribosomal subunit protein uL11 (142 aa).

This sequence belongs to the universal ribosomal protein uL11 family. Part of the ribosomal stalk of the 50S ribosomal subunit. Interacts with L10 and the large rRNA to form the base of the stalk. L10 forms an elongated spine to which L12 dimers bind in a sequential fashion forming a multimeric L10(L12)X complex. In terms of processing, one or more lysine residues are methylated.

Its function is as follows. Forms part of the ribosomal stalk which helps the ribosome interact with GTP-bound translation factors. The protein is Large ribosomal subunit protein uL11 of Bradyrhizobium diazoefficiens (strain JCM 10833 / BCRC 13528 / IAM 13628 / NBRC 14792 / USDA 110).